Here is an 86-residue protein sequence, read N- to C-terminus: uncharacterized protein (86 aa).

The next 2 helical transmembrane spans lie at 20-38 (IQFW…SVYL) and 47-63 (FSTF…TKGV). Residues 67-86 (LSQRREQGKEQGREQGREQE) form a disordered region. Residues 69–86 (QRREQGKEQGREQGREQE) show a composition bias toward basic and acidic residues.

It localises to the cell membrane. This is an uncharacterized protein from Haemophilus influenzae (strain ATCC 51907 / DSM 11121 / KW20 / Rd).